The chain runs to 216 residues: Large ribosomal subunit protein uL1 (216 aa).

The protein belongs to the universal ribosomal protein uL1 family. Component of the large ribosomal subunit.

The protein localises to the cytoplasm. Functionally, component of the large ribosomal subunit. The ribosome is a large ribonucleoprotein complex responsible for the synthesis of proteins in the cell. The sequence is that of Large ribosomal subunit protein uL1 (rpl10a) from Ictalurus punctatus (Channel catfish).